A 144-amino-acid chain; its full sequence is MNLNSIEIQKIIPHRYPFLLVDKIIDMEVGKRAVGIKNVTINEPFFQGHFPDQPIMPGVLIVEAMAQVAAVICMGSEENEGKLGVFTGIDNCKFRKQVVPGDALHIEIEMTAFRRGIGKAEGKAYVDGQLACSASLTFALIDKA.

H49 is a catalytic residue.

Belongs to the thioester dehydratase family. FabZ subfamily.

It localises to the cytoplasm. The catalysed reaction is a (3R)-hydroxyacyl-[ACP] = a (2E)-enoyl-[ACP] + H2O. In terms of biological role, involved in unsaturated fatty acids biosynthesis. Catalyzes the dehydration of short chain beta-hydroxyacyl-ACPs and long chain saturated and unsaturated beta-hydroxyacyl-ACPs. This Alkaliphilus oremlandii (strain OhILAs) (Clostridium oremlandii (strain OhILAs)) protein is 3-hydroxyacyl-[acyl-carrier-protein] dehydratase FabZ.